The chain runs to 235 residues: Type III pantothenate kinase (235 aa).

6–13 (DVGNNYIK) contacts ATP. Substrate-binding positions include Y81 and 88 to 91 (GTDR). The Proton acceptor role is filled by D90. Residue D111 participates in K(+) binding. ATP is bound at residue T114. T166 contributes to the substrate binding site.

This sequence belongs to the type III pantothenate kinase family. In terms of assembly, homodimer. The cofactor is NH4(+). K(+) is required as a cofactor.

It is found in the cytoplasm. The enzyme catalyses (R)-pantothenate + ATP = (R)-4'-phosphopantothenate + ADP + H(+). The protein operates within cofactor biosynthesis; coenzyme A biosynthesis; CoA from (R)-pantothenate: step 1/5. Functionally, catalyzes the phosphorylation of pantothenate (Pan), the first step in CoA biosynthesis. In Cytophaga hutchinsonii (strain ATCC 33406 / DSM 1761 / CIP 103989 / NBRC 15051 / NCIMB 9469 / D465), this protein is Type III pantothenate kinase.